The primary structure comprises 364 residues: Medium-wave-sensitive opsin 1 (364 aa).

Residues 1-23 are disordered; it reads MTQPWGPQMLAGGQPPESHEDST. Residues 1–52 are Extracellular-facing; sequence MTQPWGPQMLAGGQPPESHEDSTQASIFTYTNSNSTRGPFEGPNFHIAPRWV. Residues 17–43 are required for 11-cis-retinal regeneration; the sequence is ESHEDSTQASIFTYTNSNSTRGPFEGP. Asn34 is a glycosylation site (N-linked (GlcNAc...) asparagine). Residues 53–77 form a helical membrane-spanning segment; the sequence is YHLTSAWMILVVIASVFTNGLVLVA. Residues 78-89 are Cytoplasmic-facing; that stretch reads TMRFKKLRHPLN. The helical transmembrane segment at 90–115 threads the bilayer; that stretch reads WILVNLAVADLAETVIASTISVVNQF. Residues 116 to 129 lie on the Extracellular side of the membrane; it reads YGYFVLGHPLCVVE. A disulfide bridge links Cys126 with Cys203. A helical transmembrane segment spans residues 130 to 149; that stretch reads GYTVSLCGITGLWSLAIISW. Topologically, residues 150–168 are cytoplasmic; it reads ERWLVVCKPFGNVRFDAKL. The helical transmembrane segment at 169–192 threads the bilayer; that stretch reads AIAGIAFSWIWAAVWTAPPIFGWS. Residues 193-218 lie on the Extracellular side of the membrane; the sequence is RYWPYGLKTSCGPDVFSGTSYPGVQS. Residues 219-246 traverse the membrane as a helical segment; it reads YMMVLMVTCCIIPLSVIVLCYLQVWMAI. Residues 247–268 are Cytoplasmic-facing; that stretch reads RTVAKQQKESESTQKAEKEVTR. A helical transmembrane segment spans residues 269–292; that stretch reads MVVVMVFAYCLCWGPYTFFACFAT. Topologically, residues 293–300 are extracellular; sequence AHPGYSFH. The chain crosses the membrane as a helical span at residues 301 to 325; that stretch reads PLVAAIPSYFAKSATIYNPIIYVFM. The residue at position 312 (Lys312) is an N6-(retinylidene)lysine. Over 326–364 the chain is Cytoplasmic; the sequence is NRQFRNCILQLFGKKVEDSSELSSASRTEASSVSSVSPA.

This sequence belongs to the G-protein coupled receptor 1 family. Opsin subfamily. As to quaternary structure, monomer. Homodimer. Homotetramer. Post-translationally, O-glycosylated. Phosphorylated on some or all of the serine and threonine residues present in the C-terminal region. Expressed in cone photoreceptor cells.

Its subcellular location is the membrane. In terms of biological role, visual pigments are the light-absorbing molecules that mediate vision. They consist of an apoprotein, opsin, covalently linked to cis-retinal. May increase spectral sensitivity in dim light. This chain is Medium-wave-sensitive opsin 1 (OPN1MW), found in Oryctolagus cuniculus (Rabbit).